Here is a 339-residue protein sequence, read N- to C-terminus: DNA repair protein RAD51 homolog 1 (339 aa).

The tract at residues 1–23 (MAMQVQFEASTDTSAEEESFGPE) is disordered. The 30-residue stretch at 48 to 77 (TVESVAHAPKKELLNIKGISEAKADKILAE) folds into the HhH domain. Residue 127–134 (GEFRTGKT) participates in ATP binding.

It belongs to the RecA family. RAD51 subfamily. In terms of assembly, forms linear homooligomers, giving rise to a RAD51 nucleoprotein filament, which is essential for strand-pairing reactions during DNA recombination. As to expression, expressed at high levels in lymphoid and reproductive organs.

It is found in the nucleus. The protein localises to the cytoplasm. Its subcellular location is the chromosome. In terms of biological role, plays an important role in homologous strand exchange, a key step in DNA repair through homologous recombination (HR). Binds to single-stranded DNA in an ATP-dependent manner to form nucleoprotein filaments which are essential for the homology search and strand exchange. Catalyzes the recognition of homology and strand exchange between homologous DNA partners to form a joint molecule between a processed DNA break and the repair template. Recruited to resolve stalled replication forks during replication stress. Also involved in interstrand cross-link repair. This chain is DNA repair protein RAD51 homolog 1 (RAD51A), found in Gallus gallus (Chicken).